The chain runs to 466 residues: Asparagine--tRNA ligase (466 aa).

It belongs to the class-II aminoacyl-tRNA synthetase family. As to quaternary structure, homodimer.

The protein resides in the cytoplasm. The enzyme catalyses tRNA(Asn) + L-asparagine + ATP = L-asparaginyl-tRNA(Asn) + AMP + diphosphate + H(+). This chain is Asparagine--tRNA ligase, found in Klebsiella pneumoniae subsp. pneumoniae (strain ATCC 700721 / MGH 78578).